The chain runs to 260 residues: Carbonic anhydrase 2 (260 aa).

N-acetylserine is present on S2. S2 bears the Phosphoserine mark. The Alpha-carbonic anhydrase domain occupies H3 to F259. The Proton donor/acceptor role is filled by H64. Positions 94, 96, and 119 each coordinate Zn(2+). Residues S165 and S172 each carry the phosphoserine modification. T198–T199 is a binding site for substrate.

This sequence belongs to the alpha-carbonic anhydrase family. As to quaternary structure, interacts with SLC4A4 and SLC26A6. Interaction with SLC4A7 regulates SLC4A7 transporter activity. It depends on Zn(2+) as a cofactor.

The protein resides in the cytoplasm. It is found in the cell membrane. The enzyme catalyses hydrogencarbonate + H(+) = CO2 + H2O. It catalyses the reaction urea = cyanamide + H2O. With respect to regulation, inhibited by acetazolamide. Its function is as follows. Catalyzes the reversible hydration of carbon dioxide. Can also hydrate cyanamide to urea. Involved in the regulation of fluid secretion into the anterior chamber of the eye. Essential for bone resorption and osteoclast differentiation. Contributes to intracellular pH regulation in the duodenal upper villous epithelium during proton-coupled peptide absorption. Stimulates the chloride-bicarbonate exchange activity of SLC26A6. The sequence is that of Carbonic anhydrase 2 (CA2) from Oryctolagus cuniculus (Rabbit).